The following is a 281-amino-acid chain: ATP phosphoribosyltransferase (281 aa).

This sequence belongs to the ATP phosphoribosyltransferase family. Long subfamily. Mg(2+) serves as cofactor.

The protein resides in the cytoplasm. The catalysed reaction is 1-(5-phospho-beta-D-ribosyl)-ATP + diphosphate = 5-phospho-alpha-D-ribose 1-diphosphate + ATP. The protein operates within amino-acid biosynthesis; L-histidine biosynthesis; L-histidine from 5-phospho-alpha-D-ribose 1-diphosphate: step 1/9. Feedback inhibited by histidine. Its function is as follows. Catalyzes the condensation of ATP and 5-phosphoribose 1-diphosphate to form N'-(5'-phosphoribosyl)-ATP (PR-ATP). Has a crucial role in the pathway because the rate of histidine biosynthesis seems to be controlled primarily by regulation of HisG enzymatic activity. The protein is ATP phosphoribosyltransferase of Salinispora tropica (strain ATCC BAA-916 / DSM 44818 / JCM 13857 / NBRC 105044 / CNB-440).